The primary structure comprises 87 residues: Mitochondrial import inner membrane translocase subunit TIM9 (87 aa).

Residues 35 to 59 (CFSDCVNDFTSSKLTSKEQTCIMRC) carry the Twin CX3C motif motif. Intrachain disulfides connect Cys-35/Cys-59 and Cys-39/Cys-55.

Belongs to the small Tim family. Heterohexamer; composed of 3 copies of TIM9 and 3 copies of TIM10, named soluble 70 kDa complex. Associates with the TIM22 complex, whose core is composed of TIM22 and TIM54. Interacts with the transmembrane regions of multi-pass transmembrane proteins in transit.

It is found in the mitochondrion inner membrane. Its function is as follows. Mitochondrial intermembrane chaperone that participates in the import and insertion of multi-pass transmembrane proteins into the mitochondrial inner membrane. Also required for the transfer of beta-barrel precursors from the TOM complex to the sorting and assembly machinery (SAM complex) of the outer membrane. Acts as a chaperone-like protein that protects the hydrophobic precursors from aggregation and guide them through the mitochondrial intermembrane space. The sequence is that of Mitochondrial import inner membrane translocase subunit TIM9 (TIM9) from Eremothecium gossypii (strain ATCC 10895 / CBS 109.51 / FGSC 9923 / NRRL Y-1056) (Yeast).